We begin with the raw amino-acid sequence, 228 residues long: CD9 antigen (228 aa).

Residues P2 to Y12 lie on the Cytoplasmic side of the membrane. C9 carries S-palmitoyl cysteine lipidation. Residues L13–L33 form a helical membrane-spanning segment. Residues W34 to S55 are Extracellular-facing. N-linked (GlcNAc...) asparagine glycosylation is found at N52 and N53. A helical membrane pass occupies residues F56–L76. The Cytoplasmic portion of the chain corresponds to G77–C87. Residues C78, C79, and C87 are each lipidated (S-palmitoyl cysteine). The chain crosses the membrane as a helical span at residues M88–Y111. Over S112–I195 the chain is Extracellular. Intrachain disulfides connect C152–C181 and C153–C167. A helical transmembrane segment spans residues I196–I221. 2 S-palmitoyl cysteine lipidation sites follow: C218 and C219. Residues R222–V228 are Cytoplasmic-facing.

Belongs to the tetraspanin (TM4SF) family. Forms both disulfide-linked homodimers and higher homooligomers as well as heterooligomers with other members of the tetraspanin family. Interacts (via the second extracellular domain) with integrin ITGAV:ITGB3. Interacts with integrin ITGA6:ITGB1; interaction takes place in oocytes and is involved in sperm-egg fusion. Part of integrin-tetraspanin complexes composed of CD81, beta-1 and beta-2 integrins in the membrane of monocyte/macrophages. Interacts with CD63; identified in a complex with CD63 and ITGB3. Associates with CR2/CD21 and with PTGFRN/CD9P1. Part of a complex composed of CD9, CD81, PTGFRN and IGSF8. Interacts directly with IGSF8. Interacts with PDPN; this interaction is homophilic and attenuates platelet aggregation and pulmonary metastasis induced by PDPN. Interacts (on T cell side) with CD81 at immunological synapses between antigen-presenting cells and T cells. Palmitoylated at a low, basal level in unstimulated platelets. The level of palmitoylation increases when platelets are activated by thrombin (in vitro). The protein exists in three forms with molecular masses between 22 and 27 kDa, and is known to carry covalently linked fatty acids. Palmitoylation by ZDHHC2 regulates CD9 expression, association with other tetraspanin family proteins and function in cell adhesion. As to expression, detected in platelets (at protein level). Expressed by a variety of hematopoietic and epithelial cells.

It is found in the cell membrane. It localises to the membrane. The protein resides in the secreted. Its subcellular location is the extracellular exosome. Its function is as follows. Integral membrane protein associated with integrins, which regulates different processes, such as sperm-egg fusion, platelet activation and aggregation, and cell adhesion. Present at the cell surface of oocytes and plays a key role in sperm-egg fusion, possibly by organizing multiprotein complexes and the morphology of the membrane required for the fusion. In myoblasts, associates with CD81 and PTGFRN and inhibits myotube fusion during muscle regeneration. In macrophages, associates with CD81 and beta-1 and beta-2 integrins, and prevents macrophage fusion into multinucleated giant cells specialized in ingesting complement-opsonized large particles. Also prevents the fusion between mononuclear cell progenitors into osteoclasts in charge of bone resorption. Acts as a receptor for PSG17. Involved in platelet activation and aggregation. Regulates paranodal junction formation. Involved in cell adhesion, cell motility and tumor metastasis. In Homo sapiens (Human), this protein is CD9 antigen.